We begin with the raw amino-acid sequence, 363 residues long: L-arabinitol 4-dehydrogenase (363 aa).

Cys-53, His-78, Glu-79, Cys-108, Cys-111, Cys-114, Cys-122, and Glu-163 together coordinate Zn(2+). NAD(+) is bound by residues 190-191, Asp-211, Arg-216, Ile-282, and 306-308; these read PI and QYR.

It belongs to the zinc-containing alcohol dehydrogenase family. In terms of assembly, homotetramer. Zn(2+) is required as a cofactor.

The enzyme catalyses L-arabinitol + NAD(+) = L-xylulose + NADH + H(+). Its pathway is carbohydrate degradation; L-arabinose degradation via L-arabinitol; D-xylulose 5-phosphate from L-arabinose (fungal route): step 2/5. Its function is as follows. Catalyzes the NAD-dependent oxidation of L-arabinitol to L-xylulose in the fungal L-arabinose catabolic pathway. L-arabinose catabolism is important for using plant material as a carbon source. Not active on D-arabinitol, D-sorbitol and D-mannitol. This is L-arabinitol 4-dehydrogenase (ard-1) from Neurospora crassa (strain ATCC 24698 / 74-OR23-1A / CBS 708.71 / DSM 1257 / FGSC 987).